Consider the following 300-residue polypeptide: Secreted mono- and diacylglycerol lipase LIP4 (300 aa).

A signal peptide spans 1–16; sequence MRFLAFLLCLVPLALC. A disulfide bridge links C54 with C293. S167 serves as the catalytic Nucleophile. The active site involves D224.

Belongs to the AB hydrolase superfamily. Lipase family. Class 3 subfamily.

It is found in the secreted. The enzyme catalyses a monoacylglycerol + H2O = glycerol + a fatty acid + H(+). It catalyses the reaction a diacylglycerol + H2O = a monoacylglycerol + a fatty acid + H(+). Its function is as follows. Secreted lipase involved in Dandruff and seborrheic dermatitis (D/SD) probably via lipase-mediated breakdown of sebaceous lipids and release of irritating free fatty acids. Shows activity against monoglyceride and diglyceride substrates. Due to an absence of fatty acid synthase genes in Malassezia species, secretory lipases are essential for the yeast to generate free fatty acids from degradation of sebum and assimilate them as lipid sources for growth. Plays an essential role at the pathogen-host interface during disease progression. The sequence is that of Secreted mono- and diacylglycerol lipase LIP4 from Malassezia restricta (Seborrheic dermatitis infection agent).